Consider the following 654-residue polypeptide: Acetyl-coenzyme A synthetase (654 aa).

CoA contacts are provided by residues 193–196 (RRGK) and threonine 313. Residues 389–391 (GEP), 413–418 (DTWWQT), aspartate 506, and arginine 521 contribute to the ATP site. Serine 529 is a binding site for CoA. Residue arginine 532 participates in ATP binding. The Mg(2+) site is built by histidine 545 and valine 548. Position 619 is an N6-acetyllysine (lysine 619).

It belongs to the ATP-dependent AMP-binding enzyme family. Mg(2+) serves as cofactor. In terms of processing, acetylated. Deacetylation by the SIR2-homolog deacetylase activates the enzyme.

It carries out the reaction acetate + ATP + CoA = acetyl-CoA + AMP + diphosphate. Catalyzes the conversion of acetate into acetyl-CoA (AcCoA), an essential intermediate at the junction of anabolic and catabolic pathways. AcsA undergoes a two-step reaction. In the first half reaction, AcsA combines acetate with ATP to form acetyl-adenylate (AcAMP) intermediate. In the second half reaction, it can then transfer the acetyl group from AcAMP to the sulfhydryl group of CoA, forming the product AcCoA. This Wolinella succinogenes (strain ATCC 29543 / DSM 1740 / CCUG 13145 / JCM 31913 / LMG 7466 / NCTC 11488 / FDC 602W) (Vibrio succinogenes) protein is Acetyl-coenzyme A synthetase.